A 377-amino-acid polypeptide reads, in one-letter code: Succinyl-diaminopimelate desuccinylase (377 aa).

Zn(2+) is bound at residue His67. Asp69 is a catalytic residue. Residue Asp100 participates in Zn(2+) binding. Residue Glu134 is the Proton acceptor of the active site. Positions 135, 163, and 349 each coordinate Zn(2+).

Belongs to the peptidase M20A family. DapE subfamily. In terms of assembly, homodimer. Zn(2+) is required as a cofactor. The cofactor is Co(2+).

It catalyses the reaction N-succinyl-(2S,6S)-2,6-diaminopimelate + H2O = (2S,6S)-2,6-diaminopimelate + succinate. It functions in the pathway amino-acid biosynthesis; L-lysine biosynthesis via DAP pathway; LL-2,6-diaminopimelate from (S)-tetrahydrodipicolinate (succinylase route): step 3/3. In terms of biological role, catalyzes the hydrolysis of N-succinyl-L,L-diaminopimelic acid (SDAP), forming succinate and LL-2,6-diaminopimelate (DAP), an intermediate involved in the bacterial biosynthesis of lysine and meso-diaminopimelic acid, an essential component of bacterial cell walls. This is Succinyl-diaminopimelate desuccinylase from Dechloromonas aromatica (strain RCB).